A 105-amino-acid chain; its full sequence is Protein U4 (105 aa).

A helical transmembrane segment spans residues 5 to 25; sequence FLLFLLLLVLVINPSLVVNMV.

It belongs to the nanovirus U4 protein family.

The protein resides in the membrane. In Faba bean necrotic yellows virus (isolate Egyptian EV1-93) (FBNYV), this protein is Protein U4 (DNA-U4).